Reading from the N-terminus, the 1409-residue chain is MAVGTASLQDRLETWAQRLKNLTVSPLTRDYPDTQKTDSKRVIEAFESLQLPKAKLTGSSSSFIAFLTAFIILVARLTGDEDIAVGTNSNEDGRAFVIRVPIDTSESFAQLYAKVDKAYKEGSSQIVPLGSLRSYIQEKSKSERTPVLFRFAAYDAPASSQDYPANTFDTTDLVVNVAPGSAEVELGAYYNQRLFSSARIAFILKQLASIASNAAANPDEAIGRIDLMTEDQRALLPDPTCNLNWSNFRGAIHDIFTANAERHPEKLCVVETQSSSSPHREFTYRQINEASNILGHHLVRSGIQRGEVVMVYAYRGVDLVVAVMGILKAGATFSVIDPAYPPERQNIYLDVARPRALVNIAKATKDAGELSDIVRTFIDENLELRTEIPALALLDDGTLAGGSINGQDVFANDVALKSKPTGVVVGPDSIPTLSFTSGSEGRPKGVRGRHFSLAYYFPWMSETFKLTPDEKFTMLSGIAHDPIQRDIFTPLFLGAQLLVPAREDIQNEKLAEWIEKYGATITHLTPAMGQILVGGASAQFPALHHAFFVGDILIKRDCRSLQGLAPNVSIVNMYGTTETQRAVSYYEIPSYASNEGYLNNMKDVIMAGRGMLDVQMLVVNRYDPTRLCAIGEVGEIYVRAGGLAEGYLGSPELSAKKFLNNWFVNPEIWAEKDQAESRNEPWRQFYVGPRDRLYRSGDLGRYTPSGDVECSGRADDQVKIRGFRIELGEIDTHLSQHPLVRENVTLVRRDKDEEPTLVSYFVPDMNKWASWLESKGLKDDDSDSEGMVGLLRRFRPLRDDAREHLRTKLPTYAVPTVIIPLKRMPLNPNGKIDKPALPFPDTAELSAAAPRRASSALQALSETEQTLAQVWAKLIPNVTSRMIGPDDSFFDLGGHSILAQQMFFELRRKWRVIDISMNAIFRSPTLKGFASEIDRLLAMESFATSDDKTLAVQAANEPDDEYSKDAVQLVNELPKTFPQRTEAMLTSEPTVFLTGATGFLGAHILRDLLTRKSPSTKVVALVRAKTEELALERLRSTCRAYGFWDEAWTAKLQAVCGDLGKPQFGLSQSVWDDLTNRVDAVIHNGALVHWVYPYATLRPANVMGTIDALKLCASGKAKQFAFVSSTSALDKDRYVQESERIIAAGGNGISEDDDMEGSRVGLGTGYGQSKWAGEYLVKEAGRRGLRGTIVRSGYVLGDSVTGTTNTDDFLIRMLKGCIQIGLRPNIFNTVNMVPVDHVARIVIATAFHPPATGVNVAHVTGHPRLRFNQFLGALELYGYNVPQVDYVPWSTSLEQYVNDGEHNDKESQHALMPLYHFVTSDLPSNTKAPELDDVNAATALRADATWSGVDASAGAGVTEELVGLYASYLVQTGFLPAPTVAGARPLPAAQISEEQKKTLLSVGGRGGTS.

Residues 858–937 (QALSETEQTL…GFASEIDRLL (80 aa)) form the Carrier domain. Position 896 is an O-(pantetheine 4'-phosphoryl)serine (Ser896).

It belongs to the ATP-dependent AMP-binding enzyme family. Heterodimer of an alpha and a beta subunit. Pantetheine 4'-phosphate serves as cofactor.

It carries out the reaction (S)-2-amino-6-oxohexanoate + NADP(+) + H2O = L-2-aminoadipate + NADPH + 2 H(+). It catalyses the reaction (S)-2-amino-6-oxohexanoate + NAD(+) + H2O = L-2-aminoadipate + NADH + 2 H(+). The enzyme catalyses (S)-2-amino-6-oxohexanoate + AMP + diphosphate + NADP(+) = L-2-aminoadipate + ATP + NADPH + H(+). The protein operates within amino-acid biosynthesis; L-lysine biosynthesis via AAA pathway; L-lysine from L-alpha-aminoadipate (fungal route): step 1/3. Catalyzes the activation of alpha-aminoadipate by ATP-dependent adenylation and the reduction of activated alpha-aminoadipate by NADPH. The activated alpha-aminoadipate is bound to the phosphopantheinyl group of the enzyme itself before it is reduced to (S)-2-amino-6-oxohexanoate. This chain is L-2-aminoadipate reductase large subunit (lys2), found in Penicillium chrysogenum (Penicillium notatum).